Consider the following 103-residue polypeptide: Protein RALF-like 18 (103 aa).

The N-terminal stretch at 1–32 is a signal peptide; the sequence is MMNNMKLLIIAVMIISAALLPALVVGSRPVKC. The propeptide at 33–58 is removed in mature form; that stretch reads DNCMDGGEKEEIMKMSSGVDVSHRIL. Cysteines 92 and 98 form a disulfide.

It belongs to the plant rapid alkalinization factor (RALF) family. Post-translationally, proteolytically cleaved, probably by S1P, a subtilisin-like serine protease (subtilase).

Its subcellular location is the secreted. Its function is as follows. Cell signaling peptide that may regulate plant stress, growth, and development. Mediates a rapid alkalinization of extracellular space by mediating a transient increase in the cytoplasmic Ca(2+) concentration leading to a calcium-dependent signaling events through a cell surface receptor and a concomitant activation of some intracellular mitogen-activated protein kinases. The sequence is that of Protein RALF-like 18 (RALFL18) from Arabidopsis thaliana (Mouse-ear cress).